Here is a 498-residue protein sequence, read N- to C-terminus: Cyclin-L1 (498 aa).

Cyclin-like regions lie at residues 68-169 (ERIQ…RILK) and 182-266 (KIIV…NTMK). Residues 294 to 498 (LKARGQNPNG…SGHSHSRHRR (205 aa)) form a disordered region. The segment covering 311–320 (NGFSPASKPS) has biased composition (polar residues). Basic and acidic residues predominate over residues 321–341 (SPRDVKMDDKSPNSKLKEPEN). Residues 366–396 (KNHSRSRSRSTSRSPHRHRRSHSGTYSSHSS) form an RS region. A compositionally biased stretch (basic residues) spans 367–387 (NHSRSRSRSTSRSPHRHRRSH). The span at 388–402 (SGTYSSHSSHSPSPR) shows a compositional bias: low complexity. Phosphoserine occurs at positions 409 and 412. The span at 415–426 (RTDRDRPSETSR) shows a compositional bias: basic and acidic residues. The span at 427-440 (HSNKRRRSRSRSRS) shows a compositional bias: basic residues. Residues 441–478 (NSRERVRDRDHIKHKQERSGSGHHWDHRDRERDRSRDH) are compositionally biased toward basic and acidic residues. Positions 479 to 498 (GRNKRQSRSHSGHSHSRHRR) are enriched in basic residues.

The protein belongs to the cyclin family. Cyclin L subfamily.

It localises to the nucleus speckle. The protein localises to the nucleus. The protein resides in the nucleoplasm. Its function is as follows. Involved in pre-mRNA splicing. This chain is Cyclin-L1 (ccnl1), found in Danio rerio (Zebrafish).